The sequence spans 103 residues: Putative double-stranded DNA mimic protein APJL_1366 (103 aa).

This sequence belongs to the putative dsDNA mimic protein family.

May act as a double-stranded DNA (dsDNA) mimic. Probably regulates the activity of a dsDNA-binding protein. This chain is Putative double-stranded DNA mimic protein APJL_1366, found in Actinobacillus pleuropneumoniae serotype 3 (strain JL03).